We begin with the raw amino-acid sequence, 212 residues long: Ropporin-1 (212 aa).

An RIIa domain is found at 12–43 (PELPELLKQFTKAAIRSQPQDLIQWAAEYFGA). A Phosphoserine modification is found at Ser-56. The interaction with RHPN1 stretch occupies residues 209-212 (VRLE).

It belongs to the ropporin family. As to quaternary structure, homodimer. Interacts with AKAP3. May interact with SPA17. Interacts with RHPN1. Interacts with FSCB; the interaction increases upon spermatozoa capacitation conditions. Interacts with CFAP61. Post-translationally, sumoylated, sumoylation decreases upon spermatozoa capacitation conditions.

Its subcellular location is the cell projection. The protein localises to the cilium. It is found in the flagellum. Its function is as follows. Important for male fertility. With ROPN1L, involved in fibrous sheath integrity and sperm motility, plays a role in PKA-dependent signaling processes required for spermatozoa capacitation. This Bos taurus (Bovine) protein is Ropporin-1 (ROPN1).